A 115-amino-acid chain; its full sequence is UPF0125 protein VP0646 (115 aa).

Positions 92 to 115 are disordered; the sequence is RAEQAKAAGNADPVTGGKPNALRK.

This sequence belongs to the UPF0125 (RnfH) family.

In Vibrio parahaemolyticus serotype O3:K6 (strain RIMD 2210633), this protein is UPF0125 protein VP0646.